Reading from the N-terminus, the 384-residue chain is S-adenosylmethionine synthase (384 aa).

H15 contacts ATP. D17 is a Mg(2+) binding site. K(+) is bound at residue E43. 2 residues coordinate L-methionine: E56 and Q99. Positions 99-109 (QSPDINQGVDR) are flexible loop. ATP is bound by residues 164-166 (DAK), 230-231 (RF), D239, 245-246 (RK), A262, and K266. Position 239 (D239) interacts with L-methionine. Residue K270 coordinates L-methionine.

It belongs to the AdoMet synthase family. In terms of assembly, homotetramer; dimer of dimers. Mg(2+) serves as cofactor. The cofactor is K(+).

The protein localises to the cytoplasm. It carries out the reaction L-methionine + ATP + H2O = S-adenosyl-L-methionine + phosphate + diphosphate. It functions in the pathway amino-acid biosynthesis; S-adenosyl-L-methionine biosynthesis; S-adenosyl-L-methionine from L-methionine: step 1/1. In terms of biological role, catalyzes the formation of S-adenosylmethionine (AdoMet) from methionine and ATP. The overall synthetic reaction is composed of two sequential steps, AdoMet formation and the subsequent tripolyphosphate hydrolysis which occurs prior to release of AdoMet from the enzyme. This is S-adenosylmethionine synthase from Klebsiella pneumoniae (strain 342).